Here is a 190-residue protein sequence, read N- to C-terminus: Thiamine biosynthesis protein X (190 aa).

An N-terminal signal peptide occupies residues 1–22 (MSISRTVFGIAATAALSAALVA). Residue cysteine 23 is the site of N-palmitoyl cysteine attachment. Residue cysteine 23 is the site of S-diacylglycerol cysteine attachment. A disordered region spans residues 43–68 (SQNPTSASSTSTSSATTTSSAPVEED). Low complexity predominate over residues 47 to 63 (TSASSTSTSSATTTSSA).

The protein localises to the cell membrane. Is necessary for biosynthesis of the 4-methyl-5-(beta-hydroxyethyl)thiazol component from which thiamine is formed. The protein is Thiamine biosynthesis protein X (thiX) of Corynebacterium glutamicum (strain ATCC 13032 / DSM 20300 / JCM 1318 / BCRC 11384 / CCUG 27702 / LMG 3730 / NBRC 12168 / NCIMB 10025 / NRRL B-2784 / 534).